Consider the following 221-residue polypeptide: Protein FixW (221 aa).

The region spanning 5–156 (LNLGSPAPPI…LPKVIDGNWR (152 aa)) is the Thioredoxin domain. A disulfide bond links Cys43 and Cys46.

Belongs to the thioredoxin family.

The polypeptide is Protein FixW (fixW) (Rhizobium leguminosarum).